Reading from the N-terminus, the 142-residue chain is Large ribosomal subunit protein uL11 (142 aa).

Belongs to the universal ribosomal protein uL11 family. As to quaternary structure, part of the ribosomal stalk of the 50S ribosomal subunit. Interacts with L10 and the large rRNA to form the base of the stalk. L10 forms an elongated spine to which L12 dimers bind in a sequential fashion forming a multimeric L10(L12)X complex. In terms of processing, one or more lysine residues are methylated.

Functionally, forms part of the ribosomal stalk which helps the ribosome interact with GTP-bound translation factors. In Idiomarina loihiensis (strain ATCC BAA-735 / DSM 15497 / L2-TR), this protein is Large ribosomal subunit protein uL11.